A 190-amino-acid chain; its full sequence is Elongation factor P (190 aa).

Position 34 is an N6-(3,6-diaminohexanoyl)-5-hydroxylysine (Lys-34).

It belongs to the elongation factor P family. May be beta-lysylated on the epsilon-amino group of Lys-34 by the combined action of EpmA and EpmB, and then hydroxylated on the C5 position of the same residue by EpmC (if this protein is present). Lysylation is critical for the stimulatory effect of EF-P on peptide-bond formation. The lysylation moiety may extend toward the peptidyltransferase center and stabilize the terminal 3-CCA end of the tRNA. Hydroxylation of the C5 position on Lys-34 may allow additional potential stabilizing hydrogen-bond interactions with the P-tRNA.

The protein resides in the cytoplasm. Its pathway is protein biosynthesis; polypeptide chain elongation. In terms of biological role, involved in peptide bond synthesis. Alleviates ribosome stalling that occurs when 3 or more consecutive Pro residues or the sequence PPG is present in a protein, possibly by augmenting the peptidyl transferase activity of the ribosome. Modification of Lys-34 is required for alleviation. This is Elongation factor P from Hahella chejuensis (strain KCTC 2396).